The sequence spans 181 residues: Large ribosomal subunit protein uL16 (181 aa).

This sequence belongs to the universal ribosomal protein uL16 family.

The chain is Large ribosomal subunit protein uL16 from Pyrococcus abyssi (strain GE5 / Orsay).